A 189-amino-acid polypeptide reads, in one-letter code: Elongation factor P (189 aa).

It belongs to the elongation factor P family.

Its subcellular location is the cytoplasm. It participates in protein biosynthesis; polypeptide chain elongation. Involved in peptide bond synthesis. Stimulates efficient translation and peptide-bond synthesis on native or reconstituted 70S ribosomes in vitro. Probably functions indirectly by altering the affinity of the ribosome for aminoacyl-tRNA, thus increasing their reactivity as acceptors for peptidyl transferase. The chain is Elongation factor P from Sinorhizobium medicae (strain WSM419) (Ensifer medicae).